Here is a 165-residue protein sequence, read N- to C-terminus: Leukotoxin-activating lysine-acyltransferase LktC (165 aa).

Residues His22 and Asp91 contribute to the active site.

Belongs to the RTX toxin acyltransferase family.

It is found in the cytoplasm. The enzyme catalyses a fatty acyl-[ACP] + L-lysyl-[protein] = N(6)-(fatty acyl)-L-lysyl-[protein] + holo-[ACP] + H(+). Functionally, involved in fatty acylation of the protoxin (LktA) at two internal lysine residues, thereby converting it to the active toxin. The protein is Leukotoxin-activating lysine-acyltransferase LktC (lktC) of Pasteurella haemolytica-like sp. (strain 5943B).